The primary structure comprises 207 residues: Thiamine-phosphate synthase (207 aa).

Residues 35–39 and N67 contribute to the 4-amino-2-methyl-5-(diphosphooxymethyl)pyrimidine site; that span reads QYRDK. Mg(2+) is bound by residues D68 and D86. T105 is a binding site for 4-amino-2-methyl-5-(diphosphooxymethyl)pyrimidine. 132 to 134 provides a ligand contact to 2-[(2R,5Z)-2-carboxy-4-methylthiazol-5(2H)-ylidene]ethyl phosphate; the sequence is SNT. Residue K135 coordinates 4-amino-2-methyl-5-(diphosphooxymethyl)pyrimidine. G162 is a binding site for 2-[(2R,5Z)-2-carboxy-4-methylthiazol-5(2H)-ylidene]ethyl phosphate.

It belongs to the thiamine-phosphate synthase family. Mg(2+) is required as a cofactor.

The catalysed reaction is 2-[(2R,5Z)-2-carboxy-4-methylthiazol-5(2H)-ylidene]ethyl phosphate + 4-amino-2-methyl-5-(diphosphooxymethyl)pyrimidine + 2 H(+) = thiamine phosphate + CO2 + diphosphate. It carries out the reaction 2-(2-carboxy-4-methylthiazol-5-yl)ethyl phosphate + 4-amino-2-methyl-5-(diphosphooxymethyl)pyrimidine + 2 H(+) = thiamine phosphate + CO2 + diphosphate. It catalyses the reaction 4-methyl-5-(2-phosphooxyethyl)-thiazole + 4-amino-2-methyl-5-(diphosphooxymethyl)pyrimidine + H(+) = thiamine phosphate + diphosphate. It participates in cofactor biosynthesis; thiamine diphosphate biosynthesis; thiamine phosphate from 4-amino-2-methyl-5-diphosphomethylpyrimidine and 4-methyl-5-(2-phosphoethyl)-thiazole: step 1/1. Functionally, condenses 4-methyl-5-(beta-hydroxyethyl)thiazole monophosphate (THZ-P) and 2-methyl-4-amino-5-hydroxymethyl pyrimidine pyrophosphate (HMP-PP) to form thiamine monophosphate (TMP). The chain is Thiamine-phosphate synthase from Pseudomonas fluorescens (strain Pf0-1).